We begin with the raw amino-acid sequence, 125 residues long: Large ribosomal subunit protein bL19 (125 aa).

This sequence belongs to the bacterial ribosomal protein bL19 family.

This protein is located at the 30S-50S ribosomal subunit interface and may play a role in the structure and function of the aminoacyl-tRNA binding site. The polypeptide is Large ribosomal subunit protein bL19 (Wolbachia sp. subsp. Brugia malayi (strain TRS)).